The sequence spans 901 residues: MLIPSKLSRPVRLDHTVVRERLLAKLSGANNFRLALITSPAGYGKTTLISQWAAGKNDIGWYSLDEGDNQQERFASYLIATVQQATNGHCAICETMAQKRQYASLTSLFAQLFIELAEWHSPLYLVIDDYHLITNPVIHESMRFFIRHQPENLTLVVLSRNLPQLGIANLRVRDQLLEIGSQQLAFTHQEAKQFFDCRLSSPIEAAESSRICDDVSGWATALQLIALSARQNTHSAHKSARRLAGINASHLSDYLVDEVLDNVDLATRHFLLKSAILRSMNDALITRVTGEENGQMRLEEIERQGLFLQRMDDTGEWFCYHPLFGNFLRQRCQWELAAELPEIHRAAAESWMAQGFPSEAIHHALAAGDALMLRDILLNHAWSLFNHSELSLLEESLKALPWDSLLENPQLVLLQAWLMQSQHRYGEVNTLLARAEHEIKDIREGTMHAEFNALRAQVAINDGNPDEAERLAKLALEELPPGWFYSRIVATSVLGEVLHCKGELTRSLALMQQTEQMARQHDVWHYALWSLIQQSEILFAQGFLQTAWETQEKAFQLINEQHLEQLPMHEFLVRIRAQLLWAWARLDEAEASARSGIEVLSSYQPQQQLQCLAMLIQCSLARGDLDNARSQLNRLENLLGNGKYHSDWISNANKVRVIYWQMTGDKAAAANWLRHTAKPEFANNHFLQGQWRNIARAQILLGEFEPAEIVLEELNENARSLRLMSDLNRNLLLLNQLYWQAGRKSDAQRVLLDALKLANRTGFISHFVIEGEAMAQQLRQLIQLNTLPELEQHRAQRILREINQHHRHKFAHFDENFVERLLNHPEVPELIRTSPLTQREWQVLGLIYSGYSNEQIAGELEVAATTIKTHIRNLYQKLGVAHRQAAVQHAQKLLKMMGYGV.

39 to 46 (SPAGYGKT) contributes to the ATP binding site. The region spanning 829–894 (ELIRTSPLTQ…AAVQHAQKLL (66 aa)) is the HTH luxR-type domain. Positions 853 to 872 (NEQIAGELEVAATTIKTHIR) form a DNA-binding region, H-T-H motif.

Belongs to the MalT family. As to quaternary structure, monomer in solution. Oligomerizes to an active state in the presence of the positive effectors ATP and maltotriose.

Its activity is regulated as follows. Activated by ATP and maltotriose, which are both required for DNA binding. Functionally, positively regulates the transcription of the maltose regulon whose gene products are responsible for uptake and catabolism of malto-oligosaccharides. Specifically binds to the promoter region of its target genes, recognizing a short DNA motif called the MalT box. The chain is HTH-type transcriptional regulator MalT from Shigella boydii serotype 4 (strain Sb227).